Reading from the N-terminus, the 396-residue chain is Odorant receptor 49a (396 aa).

Over 1–6 the chain is Cytoplasmic; it reads MEKLRS. The chain crosses the membrane as a helical span at residues 7–27; the sequence is YEDFIFMANMMFKTLGYDLFH. The Extracellular portion of the chain corresponds to 28-34; it reads TPKPWWR. Residues 35–55 form a helical membrane-spanning segment; that stretch reads YLLVRGYFVLCTISNFYEASM. Residues 56-70 lie on the Cytoplasmic side of the membrane; the sequence is VTTRIIEWESLAGSP. Residues 71–91 traverse the membrane as a helical segment; that stretch reads SKIMRQGLHFFYMLSSQLKFI. Over 92–141 the chain is Extracellular; sequence TFMINRKRLLQLSHRLKELYPHKEQNQRKYEVNKYYLSCSTRNVLYVYYF. Residues 142-162 form a helical membrane-spanning segment; it reads VMVVMALEPLVQSCIMYLIGF. Residues 163–209 lie on the Cytoplasmic side of the membrane; sequence GKADFTYKRIFPTRLTFDSEKPLGYVLAYVIDFTYSQFIVNVSLGTD. The helical transmembrane segment at 210–230 threads the bilayer; that stretch reads LWMMCVSSQISMHLGYLANML. Topologically, residues 231-266 are extracellular; it reads ASIRPSPETEQQDCDFLASIIKRHQLMIRLQKDVNY. Residues 267–287 form a helical membrane-spanning segment; that stretch reads VFGLLLASNLFTTSCLLCCMA. Residues 288-296 lie on the Cytoplasmic side of the membrane; the sequence is YYTVVEGFN. Residues 297–317 traverse the membrane as a helical segment; the sequence is WEGISYMMLFASVAAQFYVVS. Over 318-396 the chain is Extracellular; sequence SHGQMLIDLS…FAVIRQTVEK (79 aa).

This sequence belongs to the insect chemoreceptor superfamily. Heteromeric odorant receptor channel (TC 1.A.69) family. Or49a subfamily. In terms of assembly, interacts with Orco. Complexes exist early in the endomembrane system in olfactory sensory neurons (OSNs), coupling these complexes to the conserved ciliary trafficking pathway.

It localises to the cell membrane. Functionally, odorant receptor which mediates acceptance or avoidance behavior, depending on its substrates. The odorant receptor repertoire encodes a large collection of odor stimuli that vary widely in identity, intensity, and duration. May form a complex with Orco to form odorant-sensing units, providing sensitive and prolonged odorant signaling and calcium permeability. Involved in the behavioral responses to butanol and 2-heptanone. This chain is Odorant receptor 49a (Or49a), found in Drosophila melanogaster (Fruit fly).